A 360-amino-acid chain; its full sequence is Peptide chain release factor 1 (360 aa).

An N5-methylglutamine modification is found at Gln-235. Residues 283–308 (MQKRQQAEASERRNLLGSGDRSDRNR) show a composition bias toward basic and acidic residues. The tract at residues 283–313 (MQKRQQAEASERRNLLGSGDRSDRNRTYNFP) is disordered.

It belongs to the prokaryotic/mitochondrial release factor family. Post-translationally, methylated by PrmC. Methylation increases the termination efficiency of RF1.

It localises to the cytoplasm. In terms of biological role, peptide chain release factor 1 directs the termination of translation in response to the peptide chain termination codons UAG and UAA. This is Peptide chain release factor 1 from Yersinia enterocolitica serotype O:8 / biotype 1B (strain NCTC 13174 / 8081).